The following is a 375-amino-acid chain: UDP-N-acetylglucosamine--N-acetylmuramyl-(pentapeptide) pyrophosphoryl-undecaprenol N-acetylglucosamine transferase (375 aa).

Residues Thr-15–Gly-17, Asn-126, Arg-169, Ser-197, and Gln-298 contribute to the UDP-N-acetyl-alpha-D-glucosamine site.

Belongs to the glycosyltransferase 28 family. MurG subfamily.

The protein resides in the cell inner membrane. It carries out the reaction di-trans,octa-cis-undecaprenyl diphospho-N-acetyl-alpha-D-muramoyl-L-alanyl-D-glutamyl-meso-2,6-diaminopimeloyl-D-alanyl-D-alanine + UDP-N-acetyl-alpha-D-glucosamine = di-trans,octa-cis-undecaprenyl diphospho-[N-acetyl-alpha-D-glucosaminyl-(1-&gt;4)]-N-acetyl-alpha-D-muramoyl-L-alanyl-D-glutamyl-meso-2,6-diaminopimeloyl-D-alanyl-D-alanine + UDP + H(+). It participates in cell wall biogenesis; peptidoglycan biosynthesis. Its function is as follows. Cell wall formation. Catalyzes the transfer of a GlcNAc subunit on undecaprenyl-pyrophosphoryl-MurNAc-pentapeptide (lipid intermediate I) to form undecaprenyl-pyrophosphoryl-MurNAc-(pentapeptide)GlcNAc (lipid intermediate II). This Rhodopseudomonas palustris (strain BisB18) protein is UDP-N-acetylglucosamine--N-acetylmuramyl-(pentapeptide) pyrophosphoryl-undecaprenol N-acetylglucosamine transferase.